The chain runs to 110 residues: Single-stranded DNA-binding protein 1 (110 aa).

The 104-residue stretch at 1–104 (MNKILLIGRM…VVGEEVQFLE (104 aa)) folds into the SSB domain.

As to quaternary structure, homotetramer.

This is Single-stranded DNA-binding protein 1 (ssb1) from Clostridium acetobutylicum (strain ATCC 824 / DSM 792 / JCM 1419 / IAM 19013 / LMG 5710 / NBRC 13948 / NRRL B-527 / VKM B-1787 / 2291 / W).